The primary structure comprises 239 residues: Probable transcriptional regulatory protein VC_A0006 (239 aa).

It belongs to the TACO1 family.

It is found in the cytoplasm. This chain is Probable transcriptional regulatory protein VC_A0006, found in Vibrio cholerae serotype O1 (strain ATCC 39315 / El Tor Inaba N16961).